The chain runs to 169 residues: 3-hydroxyacyl-[acyl-carrier-protein] dehydratase FabZ (169 aa).

His74 is an active-site residue.

Belongs to the thioester dehydratase family. FabZ subfamily.

It is found in the cytoplasm. The enzyme catalyses a (3R)-hydroxyacyl-[ACP] = a (2E)-enoyl-[ACP] + H2O. Involved in unsaturated fatty acids biosynthesis. Catalyzes the dehydration of short chain beta-hydroxyacyl-ACPs and long chain saturated and unsaturated beta-hydroxyacyl-ACPs. This is 3-hydroxyacyl-[acyl-carrier-protein] dehydratase FabZ from Gluconobacter oxydans (strain 621H) (Gluconobacter suboxydans).